We begin with the raw amino-acid sequence, 487 residues long: Protein nucleotidyltransferase YdiU (487 aa).

ATP contacts are provided by G90, G92, R93, K113, D125, G126, R176, and R183. The Proton acceptor role is filled by D252. Mg(2+)-binding residues include N253 and D262. D262 lines the ATP pocket.

It belongs to the SELO family. Mg(2+) is required as a cofactor. It depends on Mn(2+) as a cofactor.

It catalyses the reaction L-seryl-[protein] + ATP = 3-O-(5'-adenylyl)-L-seryl-[protein] + diphosphate. The catalysed reaction is L-threonyl-[protein] + ATP = 3-O-(5'-adenylyl)-L-threonyl-[protein] + diphosphate. It carries out the reaction L-tyrosyl-[protein] + ATP = O-(5'-adenylyl)-L-tyrosyl-[protein] + diphosphate. The enzyme catalyses L-histidyl-[protein] + UTP = N(tele)-(5'-uridylyl)-L-histidyl-[protein] + diphosphate. It catalyses the reaction L-seryl-[protein] + UTP = O-(5'-uridylyl)-L-seryl-[protein] + diphosphate. The catalysed reaction is L-tyrosyl-[protein] + UTP = O-(5'-uridylyl)-L-tyrosyl-[protein] + diphosphate. In terms of biological role, nucleotidyltransferase involved in the post-translational modification of proteins. It can catalyze the addition of adenosine monophosphate (AMP) or uridine monophosphate (UMP) to a protein, resulting in modifications known as AMPylation and UMPylation. In Pseudomonas syringae pv. syringae (strain B728a), this protein is Protein nucleotidyltransferase YdiU.